We begin with the raw amino-acid sequence, 595 residues long: Phenylalanine--tRNA ligase beta subunit (595 aa).

The 3'-CCA residue in tRNA stretch occupies residues 86–90 (KLSKP). The B5 domain maps to 292 to 370 (FNDRIMDVSI…VGYGFNNLPK (79 aa)). 4 residues coordinate Mg(2+): Asp-348, Asp-354, Glu-357, and Asp-358.

Belongs to the phenylalanyl-tRNA synthetase beta subunit family. Type 2 subfamily. Tetramer of two alpha and two beta subunits. Mg(2+) serves as cofactor.

It is found in the cytoplasm. The enzyme catalyses tRNA(Phe) + L-phenylalanine + ATP = L-phenylalanyl-tRNA(Phe) + AMP + diphosphate + H(+). This chain is Phenylalanine--tRNA ligase beta subunit (FRS1), found in Saccharomyces cerevisiae (strain ATCC 204508 / S288c) (Baker's yeast).